A 494-amino-acid polypeptide reads, in one-letter code: O-acetyltransferase ptmV (494 aa).

A disordered region spans residues 181–203; it reads ESQQDSREKLRHSGGPPDPRFDH.

The protein belongs to the fumigaclavine B O-acetyltransferase family. As to quaternary structure, monomer.

The protein operates within secondary metabolite biosynthesis. In terms of biological role, O-acetyltransferase; part of the gene cluster that mediates the biosynthesis of the indole diterpenes penitrems. The geranylgeranyl diphosphate (GGPP) synthase ptmG catalyzes the first step in penitrem biosynthesis via conversion of farnesyl pyrophosphate and isopentyl pyrophosphate into geranylgeranyl pyrophosphate (GGPP). Condensation of indole-3-glycerol phosphate with GGPP by the prenyl transferase ptmC then forms 3-geranylgeranylindole (3-GGI). Epoxidation by the FAD-dependent monooxygenase ptmM leads to a epoxidized-GGI that is substrate of the terpene cyclase ptmB for cyclization to yield paspaline. Paspaline is subsequently converted to 13-desoxypaxilline by the cytochrome P450 monooxygenase ptmP, the latter being then converted to paxilline by the cytochrome P450 monooxygenase ptmQ. Paxilline is converted to beta-paxitriol via C-10 ketoreduction by the short-chain dehydrogenase ptmH which can be monoprenylated at the C-20 by the indole diterpene prenyltransferase ptmD. A two-step elimination (acetylation and elimination) process performed by the O-acetyltransferase ptmV and ptmI leads to the production of the prenylated form of penijanthine. The FAD-linked oxidoreductase ptmO then converts the prenylated form of penijanthine into PC-M5 which is in turn transformed into PC-M4 by the aromatic dimethylallyltransferase ptmE. Five sequential oxidative transformations performed by the cytochrome P450 monooxygenases ptmK, ptmU, ptmL, ptmN and ptmJ yield the various penitrem compounds. PtmK, ptmU and ptmM are involved in the formation of the key bicyclic ring of penitrem C via the formation of the intermediates secopenitrem D and penitrem D. PtmL catalyzes the epoxidation of penitrem D and C to yield penitrem B and F, respectively. PtmJ catalyzes the last benzylic hydroxylation to convert penitrem B to prenitrem E and penitrem F to penitrem A. This is O-acetyltransferase ptmV from Penicillium ochrochloron.